A 1016-amino-acid polypeptide reads, in one-letter code: Mediator of RNA polymerase II transcription subunit 5 (1016 aa).

It belongs to the Mediator complex subunit 5 family. In terms of assembly, component of the Mediator complex.

It is found in the nucleus. Functionally, component of the Mediator complex, a coactivator involved in the regulated transcription of nearly all RNA polymerase II-dependent genes. Mediator functions as a bridge to convey information from gene-specific regulatory proteins to the basal RNA polymerase II transcription machinery. Mediator is recruited to promoters by direct interactions with regulatory proteins and serves as a scaffold for the assembly of a functional preinitiation complex with RNA polymerase II and the general transcription factors. The chain is Mediator of RNA polymerase II transcription subunit 5 (nut1) from Aspergillus terreus (strain NIH 2624 / FGSC A1156).